Consider the following 242-residue polypeptide: DNA repair protein RecO (242 aa).

This sequence belongs to the RecO family.

Involved in DNA repair and RecF pathway recombination. The polypeptide is DNA repair protein RecO (Vibrio atlanticus (strain LGP32) (Vibrio splendidus (strain Mel32))).